The following is a 475-amino-acid chain: MAASALRGLPVAGGGESSESEDDGWEIGYLDRTSQKLKGLLPIEEKKEKFKKAMTIGDVSLVQELLDSGISVDSTFQYGWTPLMYAASVANAELVRVLLDRGANASFEKDKQSILITACSAHGSEEQILKCVELLLSRNADPNVACRRLMTPIMYAARDGHTQVVALLVAHGAEVNTQDENGYTALTWAARQGHKNIVLKLLELGANKMLQTKDGKMPSEIAKRNKHHEIFNLLSFTLNPLEGKLQQLTKEDTICKILTTDSDREKDHIFSSYTAFGDLEVFLHGLGLEHMTDILKERDITLRHLLTMREDEFTKNGITSKDQQKILAALKELQVEEIQFGELSEETKLEISGDEFLNFLLKLNKQCGHLITAVQNVITELPVNSQKITLEWASPQNFTSVCEELVNNVEDLSEKVCKLKDLIQKLQNERESDPTHIQLREEVSTWNSRILKRTAITICGFGFLLFICKLTFQRK.

The tract at residues Met1 to Trp25 is disordered. Phosphoserine is present on residues Ser17, Ser18, and Ser20. 6 ANK repeats span residues Glu45–Ser74, Tyr78–Phe107, Asp110–Val144, Arg148–Thr177, Asn181–Leu210, and Asp214–Gly243. Residues Ser272 to Gln334 enclose the SAM domain.

As to quaternary structure, interacts with DDX4, PIWIL1, RANBP9 and TDRD1.

It is found in the cytoplasm. Its function is as follows. Plays a central role during spermatogenesis by repressing transposable elements and preventing their mobilization, which is essential for the germline integrity. Acts via the piRNA metabolic process, which mediates the repression of transposable elements during meiosis by forming complexes composed of piRNAs and Piwi proteins and governs the methylation and subsequent repression of transposons. Its association with pi-bodies suggests a participation in the primary piRNAs metabolic process. Required prior to the pachytene stage to facilitate the production of multiple types of piRNAs, including those associated with repeats involved in the regulation of retrotransposons. May act by mediating protein-protein interactions during germ cell maturation. In Pan troglodytes (Chimpanzee), this protein is Ankyrin repeat, SAM and basic leucine zipper domain-containing protein 1 (ASZ1).